The chain runs to 425 residues: MKILITNGRVLDPAHGIDEKFDVLIEDNRIAQVGTDIQTADAEKIDAAGCLVVPGLIDIHVHLRDPGFEYKEDIESGTRAAAAGGFTAVACMPNTSPVNDNKATTQYILHKAAQAGHAKVYPVGAITKGLKGESLAELGDMKQAGCVAVTDDGHPVSHGEIMRRALEYARSFDLPIVSHSEDLSLVGDGVMNDGFVATELGLRGIPWVAEVSAVARDVMLAEYTNARLHVAHVSTRGAVEIIRAAKARGARVTAETAPHYFTLTEDAVRGYDTHAKMNPPLRTSDDLEAIREGLADGTLSVIATDHAPHHPDEKNVEFNLALNGIIGLETALPLTLRLVEEGALSLSDAIACLTSGPAAALSLPGGTLEVGRPADVTIIDPEIKWTLDPQAGQSRSRNTPFGDWKLKGRAICTIVDGRITYRLSD.

Zn(2+) is bound by residues His-60 and His-62. Substrate-binding positions include 62-64 and Asn-94; that span reads HLR. Zn(2+) is bound by residues Asp-152, His-179, and His-232. Position 278 (Asn-278) interacts with substrate. Residue Asp-305 coordinates Zn(2+). The active site involves Asp-305. His-309 lines the substrate pocket.

The protein belongs to the metallo-dependent hydrolases superfamily. DHOase family. Class I DHOase subfamily. Zn(2+) is required as a cofactor.

It catalyses the reaction (S)-dihydroorotate + H2O = N-carbamoyl-L-aspartate + H(+). It participates in pyrimidine metabolism; UMP biosynthesis via de novo pathway; (S)-dihydroorotate from bicarbonate: step 3/3. In terms of biological role, catalyzes the reversible cyclization of carbamoyl aspartate to dihydroorotate. This is Dihydroorotase from Syntrophotalea carbinolica (strain DSM 2380 / NBRC 103641 / GraBd1) (Pelobacter carbinolicus).